The chain runs to 480 residues: MSADAYHPPTTSPRLETLDVLSIGMSLDVFRQGQVWKALQEQNAAQAEALHVGSILPMDPKKYPTSADDKDMAYEKRQADALELGLKNFLEKWPIPTVTVVRGWDPSTPNLRFTPEETRESLSVKVNDLRVPAGLHWHRIANLQDGIICNDTPEGVLEALFSLFERNPDLPAVLVYANEGISMAGALSSRDVTLKSLGAVSGPRIPGTLTDAMVALIVGRPERVDWLRQFAPYTKVNENRIDPEFRGWGWRKPPVEFRPTPFIPQPWTERALEQWDALPVLARLHRPVSVPLTHPDTGERLKREALTAQLAAAWKTASAGLRPAPARLFYDGGLNATPLAELTPALGAAQSSLDLLDSRESYDLTQRLGDTGAASPFVGITLATMASYLNGDSSMVMPLRRKDQATLIGISSPTPGKKPVHDPFGVDLLPQTASGDGPPPSADPVAPASRLTTRLPPGEDYALEEFLSSLKPSTDWQDDL.

The disordered stretch occupies residues 410 to 458; sequence ISSPTPGKKPVHDPFGVDLLPQTASGDGPPPSADPVAPASRLTTRLPPG.

In terms of assembly, interacts with the Tle3 toxin on one side and with the H2-T6SS component VgrG2b on the other side.

The protein localises to the cytoplasm. In terms of biological role, adapter protein that targets and loads the Tle3 toxin onto the H2 type VI secretion system (H2-T6SS) machinery through an interaction with the TTR domain of VgrG2b. Seems specific for Tle3. The polypeptide is Type VI lipase adapter protein Tla3 (Pseudomonas aeruginosa (strain ATCC 15692 / DSM 22644 / CIP 104116 / JCM 14847 / LMG 12228 / 1C / PRS 101 / PAO1)).